A 335-amino-acid polypeptide reads, in one-letter code: Glutaredoxin-3 (335 aa).

Ala2 is subject to N-acetylalanine. One can recognise a Thioredoxin domain in the interval 2 to 117; it reads AAGAAEAAVA…LTKKVQRHAS (116 aa). A phosphoserine mark is found at Ser117 and Ser120. Glutaredoxin domains follow at residues 144–236 and 237–335; these read APCM…PKLE and ERLK…RGEN. Residues Cys159 and Cys261 each contribute to the [2Fe-2S] cluster site.

As to quaternary structure, homodimer; the homodimer is independent of 2Fe-2S clusters. Heterotrimer; forms a heterotrimeric complex composed by two BOLA2 molecules and one GLRX3 molecule; linked by [2Fe-2S] clusters. Interacts (via N-terminus) with PRKCQ/PKC-theta. Interacts (via C-terminus) with CSRP3. Interacts with CSRP2. In terms of tissue distribution, expressed in heart, spleen, testis and, to a lower extent, in thymus and peripheral blood leukocytes. Weakly expressed in lung, placenta, colon and small intestine.

Its subcellular location is the cytoplasm. It localises to the cytosol. The protein localises to the cell cortex. It is found in the myofibril. The protein resides in the sarcomere. Its subcellular location is the z line. Functionally, together with BOLA2, acts as a cytosolic iron-sulfur (Fe-S) cluster assembly factor that facilitates [2Fe-2S] cluster insertion into a subset of cytosolic proteins. Acts as a critical negative regulator of cardiac hypertrophy and a positive inotropic regulator. Required for hemoglobin maturation. Does not possess any thyoredoxin activity since it lacks the conserved motif that is essential for catalytic activity. The protein is Glutaredoxin-3 (GLRX3) of Homo sapiens (Human).